The following is a 392-amino-acid chain: Phosphoglycerate kinase (392 aa).

Residues 21-23, Arg-36, 59-62, Arg-114, and Arg-147 each bind substrate; these read DMN and HLGR. ATP is bound by residues Lys-198, Glu-320, and 346–349; that span reads GGDT.

This sequence belongs to the phosphoglycerate kinase family. In terms of assembly, monomer.

It localises to the cytoplasm. The catalysed reaction is (2R)-3-phosphoglycerate + ATP = (2R)-3-phospho-glyceroyl phosphate + ADP. Its pathway is carbohydrate degradation; glycolysis; pyruvate from D-glyceraldehyde 3-phosphate: step 2/5. This Neisseria meningitidis serogroup A / serotype 4A (strain DSM 15465 / Z2491) protein is Phosphoglycerate kinase.